Here is a 208-residue protein sequence, read N- to C-terminus: Uridine kinase (208 aa).

An ATP-binding site is contributed by 12–19 (GGSGGGKT).

Belongs to the uridine kinase family.

It localises to the cytoplasm. It carries out the reaction uridine + ATP = UMP + ADP + H(+). It catalyses the reaction cytidine + ATP = CMP + ADP + H(+). It participates in pyrimidine metabolism; CTP biosynthesis via salvage pathway; CTP from cytidine: step 1/3. It functions in the pathway pyrimidine metabolism; UMP biosynthesis via salvage pathway; UMP from uridine: step 1/1. The polypeptide is Uridine kinase (Streptococcus pyogenes serotype M3 (strain ATCC BAA-595 / MGAS315)).